The chain runs to 473 residues: Photosystem II CP43 reaction center protein (473 aa).

The propeptide occupies methionine 1–glutamate 14. Threonine 15 is subject to N-acetylthreonine. Threonine 15 is subject to Phosphothreonine. 5 helical membrane-spanning segments follow: residues leucine 69–alanine 93, leucine 134–asparagine 155, lysine 178–threonine 200, lysine 255–serine 275, and tryptophan 291–alanine 312. Glutamate 367 contributes to the [CaMn4O5] cluster binding site. Residues arginine 447–proline 471 traverse the membrane as a helical segment.

Belongs to the PsbB/PsbC family. PsbC subfamily. In terms of assembly, PSII is composed of 1 copy each of membrane proteins PsbA, PsbB, PsbC, PsbD, PsbE, PsbF, PsbH, PsbI, PsbJ, PsbK, PsbL, PsbM, PsbT, PsbX, PsbY, PsbZ, Psb30/Ycf12, at least 3 peripheral proteins of the oxygen-evolving complex and a large number of cofactors. It forms dimeric complexes. It depends on Binds multiple chlorophylls and provides some of the ligands for the Ca-4Mn-5O cluster of the oxygen-evolving complex. It may also provide a ligand for a Cl- that is required for oxygen evolution. PSII binds additional chlorophylls, carotenoids and specific lipids. as a cofactor.

The protein resides in the plastid. The protein localises to the chloroplast thylakoid membrane. In terms of biological role, one of the components of the core complex of photosystem II (PSII). It binds chlorophyll and helps catalyze the primary light-induced photochemical processes of PSII. PSII is a light-driven water:plastoquinone oxidoreductase, using light energy to abstract electrons from H(2)O, generating O(2) and a proton gradient subsequently used for ATP formation. This is Photosystem II CP43 reaction center protein from Physcomitrium patens (Spreading-leaved earth moss).